Here is a 291-residue protein sequence, read N- to C-terminus: Proline iminopeptidase (291 aa).

The AB hydrolase-1 domain maps to 30–274; that stretch reads LLIHGGPGSS…ANSRHLALLD (245 aa). Residue Ser-103 is the Nucleophile of the active site. Residue Asp-242 is part of the active site. His-269 serves as the catalytic Proton donor.

The protein belongs to the peptidase S33 family.

Its subcellular location is the cell envelope. The catalysed reaction is Release of N-terminal proline from a peptide.. Its function is as follows. Releases the N-terminal proline from various substrates. In Lacticaseibacillus rhamnosus (strain Lc 705) (Lactobacillus rhamnosus), this protein is Proline iminopeptidase.